The chain runs to 345 residues: Dihydroorotase (345 aa).

Zn(2+)-binding residues include His13 and His15. Substrate contacts are provided by residues His15–Arg17 and Asn41. 3 residues coordinate Zn(2+): Lys98, His135, and His173. Lys98 is subject to N6-carboxylysine. His135 is a binding site for substrate. Residue Leu218 coordinates substrate. A Zn(2+)-binding site is contributed by Asp246. Asp246 is an active-site residue. Residues His250 and Ala262 each coordinate substrate.

This sequence belongs to the metallo-dependent hydrolases superfamily. DHOase family. Class II DHOase subfamily. Homodimer. Requires Zn(2+) as cofactor.

It carries out the reaction (S)-dihydroorotate + H2O = N-carbamoyl-L-aspartate + H(+). It functions in the pathway pyrimidine metabolism; UMP biosynthesis via de novo pathway; (S)-dihydroorotate from bicarbonate: step 3/3. Catalyzes the reversible cyclization of carbamoyl aspartate to dihydroorotate. This is Dihydroorotase from Shewanella pealeana (strain ATCC 700345 / ANG-SQ1).